We begin with the raw amino-acid sequence, 875 residues long: Peptidyl-glycine alpha-amidating monooxygenase B (875 aa).

Residues 1–39 (MDMASLISSLLVLFLIFQNSCYCFRSPLSVFKRYEESTR) form the signal peptide. Residues 3-394 (MASLISSLLV…KREEEEVLNQ (392 aa)) are peptidylglycine alpha-hydroxylating monooxygenase. Residues 40-763 (SLSNDCLGTT…PSVVQESSAG (724 aa)) are Intragranular-facing. 5 disulfide bridges follow: cysteine 45-cysteine 184, cysteine 79-cysteine 124, cysteine 112-cysteine 129, cysteine 225-cysteine 332, and cysteine 291-cysteine 313. Residues histidine 105 and histidine 106 each contribute to the Cu(2+) site. Residues histidine 170, histidine 240, histidine 242, and methionine 312 each coordinate Cu(2+). The interval 395–716 (DVHLEEDTDW…SPSKAEHRSV (322 aa)) is peptidyl-alpha-hydroxyglycine alpha-amidating lyase. Arginine 430 is a binding site for a protein. N-linked (GlcNAc...) asparagine glycosylation occurs at asparagine 465. 3 NHL repeats span residues 467-508 (SKVL…VGAE), 516-561 (LGRA…FSPN), and 569-613 (GEET…FHAK). Cystine bridges form between cysteine 530-cysteine 551 and cysteine 598-cysteine 609. Tyrosine 550 and arginine 602 together coordinate a protein. N-linked (GlcNAc...) asparagine glycosylation occurs at asparagine 662. One copy of the NHL 4 repeat lies at 666–709 (GDILDTFIPARKNFEMPHDIAAGDDGTVYVGDAHANAVWKFSPS). Residues 735-755 (HMRSRPKTNESVGQQTQEKPS) form a disordered region. Residue asparagine 743 is glycosylated (N-linked (GlcNAc...) asparagine). Residues 743 to 755 (NESVGQQTQEKPS) show a composition bias toward polar residues. A helical membrane pass occupies residues 764–787 (VSFVLIITLLIIPVVVLIAIAIFI). Residues 788–875 (RWRKVRMYGG…APPIPPVSSS (88 aa)) lie on the Cytoplasmic side of the membrane. The tract at residues 837–875 (KGFDRLSTEGSDQEKDDDDDGSDSEEEYSAPPIPPVSSS) is disordered. The span at 850-864 (EKDDDDDGSDSEEEY) shows a compositional bias: acidic residues.

This sequence in the C-terminal section; belongs to the peptidyl-alpha-hydroxyglycine alpha-amidating lyase family. In the N-terminal section; belongs to the copper type II ascorbate-dependent monooxygenase family. As to quaternary structure, monomer. Zn(2+) is required as a cofactor. Requires Cu(2+) as cofactor.

It localises to the cytoplasmic vesicle. Its subcellular location is the secretory vesicle membrane. The enzyme catalyses a [peptide]-C-terminal glycine + 2 L-ascorbate + O2 = a [peptide]-C-terminal (2S)-2-hydroxyglycine + 2 monodehydro-L-ascorbate radical + H2O. It catalyses the reaction a [peptide]-C-terminal (2S)-2-hydroxyglycine = a [peptide]-C-terminal amide + glyoxylate. Functionally, bifunctional enzyme that catalyzes amidation of the C-terminus of proteins. Alpha-amidation is present at the C-terminus of many endocrine hormones and neuropeptides and is required for their activity. C-terminal amidation also takes place in response to protein fragmentation triggered by oxidative stress, promoting degradation of amidated protein fragments by the proteasome. Alpha-amidation involves two sequential reactions, both of which are catalyzed by separate catalytic domains of the enzyme. The first step, catalyzed by peptidyl alpha-hydroxylating monooxygenase (PHM) domain, is the copper-, ascorbate-, and O2- dependent stereospecific hydroxylation (with S stereochemistry) at the alpha-carbon (C-alpha) of the C-terminal glycine of the peptidylglycine substrate. The second step, catalyzed by the peptidylglycine amidoglycolate lyase (PAL) domain, is the zinc-dependent cleavage of the N-C-alpha bond, producing the alpha-amidated peptide and glyoxylate. This Xenopus laevis (African clawed frog) protein is Peptidyl-glycine alpha-amidating monooxygenase B (pam-b).